The sequence spans 275 residues: Large ribosomal subunit protein uL2 (275 aa).

2 disordered regions span residues 28-54 (APHA…TRHI) and 223-275 (VAMN…RNKK).

Belongs to the universal ribosomal protein uL2 family. In terms of assembly, part of the 50S ribosomal subunit. Forms a bridge to the 30S subunit in the 70S ribosome.

In terms of biological role, one of the primary rRNA binding proteins. Required for association of the 30S and 50S subunits to form the 70S ribosome, for tRNA binding and peptide bond formation. It has been suggested to have peptidyltransferase activity; this is somewhat controversial. Makes several contacts with the 16S rRNA in the 70S ribosome. The protein is Large ribosomal subunit protein uL2 of Saccharophagus degradans (strain 2-40 / ATCC 43961 / DSM 17024).